Reading from the N-terminus, the 174-residue chain is Large ribosomal subunit protein uL10 (174 aa).

This sequence belongs to the universal ribosomal protein uL10 family. Part of the ribosomal stalk of the 50S ribosomal subunit. The N-terminus interacts with L11 and the large rRNA to form the base of the stalk. The C-terminus forms an elongated spine to which L12 dimers bind in a sequential fashion forming a multimeric L10(L12)X complex.

Forms part of the ribosomal stalk, playing a central role in the interaction of the ribosome with GTP-bound translation factors. The sequence is that of Large ribosomal subunit protein uL10 from Methylobacillus flagellatus (strain ATCC 51484 / DSM 6875 / VKM B-1610 / KT).